Here is a 397-residue protein sequence, read N- to C-terminus: Acetate kinase (397 aa).

Asn-7 contributes to the Mg(2+) binding site. ATP is bound at residue Lys-14. Arg-91 contributes to the substrate binding site. Catalysis depends on Asp-148, which acts as the Proton donor/acceptor. ATP is bound by residues 208-212 (HLGNG), 283-285 (DFR), and 331-335 (GIGEN). Glu-384 provides a ligand contact to Mg(2+).

It belongs to the acetokinase family. In terms of assembly, homodimer. It depends on Mg(2+) as a cofactor. Mn(2+) serves as cofactor.

The protein resides in the cytoplasm. The enzyme catalyses acetate + ATP = acetyl phosphate + ADP. The protein operates within metabolic intermediate biosynthesis; acetyl-CoA biosynthesis; acetyl-CoA from acetate: step 1/2. Its function is as follows. Catalyzes the formation of acetyl phosphate from acetate and ATP. Can also catalyze the reverse reaction. The polypeptide is Acetate kinase (Treponema denticola (strain ATCC 35405 / DSM 14222 / CIP 103919 / JCM 8153 / KCTC 15104)).